The primary structure comprises 156 residues: Cyanate hydratase (156 aa).

Active-site residues include Arg-96, Glu-99, and Ser-122.

It belongs to the cyanase family.

The catalysed reaction is cyanate + hydrogencarbonate + 3 H(+) = NH4(+) + 2 CO2. Catalyzes the reaction of cyanate with bicarbonate to produce ammonia and carbon dioxide. The polypeptide is Cyanate hydratase (Pseudomonas entomophila (strain L48)).